We begin with the raw amino-acid sequence, 649 residues long: 1-deoxy-D-xylulose-5-phosphate synthase 1 (649 aa).

Thiamine diphosphate-binding positions include H73 and 113-115 (SHA). Mg(2+) is bound at residue D144. Thiamine diphosphate contacts are provided by residues 145 to 146 (GA), N174, Y285, and E367. N174 is a binding site for Mg(2+). Positions 623–649 (LLPGTGTRPGAQEYRPRMPLTDWSEPA) are disordered.

It belongs to the transketolase family. DXPS subfamily. In terms of assembly, homodimer. It depends on Mg(2+) as a cofactor. The cofactor is thiamine diphosphate.

The catalysed reaction is D-glyceraldehyde 3-phosphate + pyruvate + H(+) = 1-deoxy-D-xylulose 5-phosphate + CO2. It participates in metabolic intermediate biosynthesis; 1-deoxy-D-xylulose 5-phosphate biosynthesis; 1-deoxy-D-xylulose 5-phosphate from D-glyceraldehyde 3-phosphate and pyruvate: step 1/1. Catalyzes the acyloin condensation reaction between C atoms 2 and 3 of pyruvate and glyceraldehyde 3-phosphate to yield 1-deoxy-D-xylulose-5-phosphate (DXP). This is 1-deoxy-D-xylulose-5-phosphate synthase 1 from Kitasatospora griseola (Streptomyces griseolosporeus).